A 151-amino-acid chain; its full sequence is Transcriptional repressor NrdR (151 aa).

The segment at 3–34 (CPFCNAQDTKVIDSRLVSEGSQVRRRRSCNEC) is a zinc-finger region. Residues 49–139 (PRLIKSDGRR…VYRSFKDVKE (91 aa)) enclose the ATP-cone domain.

The protein belongs to the NrdR family. It depends on Zn(2+) as a cofactor.

Functionally, negatively regulates transcription of bacterial ribonucleotide reductase nrd genes and operons by binding to NrdR-boxes. The polypeptide is Transcriptional repressor NrdR (Psychromonas ingrahamii (strain DSM 17664 / CCUG 51855 / 37)).